The sequence spans 261 residues: Hydroxyethylthiazole kinase (261 aa).

Met-40 is a substrate binding site. ATP contacts are provided by Lys-116 and Thr-162. Gly-189 is a binding site for substrate.

Belongs to the Thz kinase family. Requires Mg(2+) as cofactor.

The enzyme catalyses 5-(2-hydroxyethyl)-4-methylthiazole + ATP = 4-methyl-5-(2-phosphooxyethyl)-thiazole + ADP + H(+). It participates in cofactor biosynthesis; thiamine diphosphate biosynthesis; 4-methyl-5-(2-phosphoethyl)-thiazole from 5-(2-hydroxyethyl)-4-methylthiazole: step 1/1. Catalyzes the phosphorylation of the hydroxyl group of 4-methyl-5-beta-hydroxyethylthiazole (THZ). The sequence is that of Hydroxyethylthiazole kinase from Methanosarcina mazei (strain ATCC BAA-159 / DSM 3647 / Goe1 / Go1 / JCM 11833 / OCM 88) (Methanosarcina frisia).